The following is a 484-amino-acid chain: RuvB-like helicase 1 (484 aa).

Over residues 1 to 11 (MSMAASSSTAT) the composition is skewed to low complexity. The interval 1 to 27 (MSMAASSSTATVQPSGIITQPPPPSTL) is disordered. 87-94 (GPPGTGKT) contributes to the ATP binding site.

Belongs to the RuvB family. As to quaternary structure, may form heterododecamers with RVB2. Component of the SWR1 chromatin remodeling complex, the INO80 chromatin remodeling complex, and of the R2TP complex.

The protein resides in the nucleus. It catalyses the reaction ATP + H2O = ADP + phosphate + H(+). DNA helicase which participates in several chromatin remodeling complexes, including the SWR1 and the INO80 complexes. The SWR1 complex mediates the ATP-dependent exchange of histone H2A for the H2A variant HZT1 leading to transcriptional regulation of selected genes by chromatin remodeling. The INO80 complex remodels chromatin by shifting nucleosomes and is involved in DNA repair. Also involved in pre-rRNA processing. This Cryptococcus neoformans var. neoformans serotype D (strain B-3501A) (Filobasidiella neoformans) protein is RuvB-like helicase 1 (RVB1).